Here is a 323-residue protein sequence, read N- to C-terminus: Beta-ketoacyl-[acyl-carrier-protein] synthase III (323 aa).

Catalysis depends on residues Cys-113 and His-250. The tract at residues Gln-251 to Arg-255 is ACP-binding. Asn-280 is a catalytic residue.

Belongs to the thiolase-like superfamily. FabH family. In terms of assembly, homodimer.

The protein localises to the cytoplasm. It carries out the reaction malonyl-[ACP] + acetyl-CoA + H(+) = 3-oxobutanoyl-[ACP] + CO2 + CoA. It functions in the pathway lipid metabolism; fatty acid biosynthesis. Functionally, catalyzes the condensation reaction of fatty acid synthesis by the addition to an acyl acceptor of two carbons from malonyl-ACP. Catalyzes the first condensation reaction which initiates fatty acid synthesis and may therefore play a role in governing the total rate of fatty acid production. Possesses both acetoacetyl-ACP synthase and acetyl transacylase activities. Its substrate specificity determines the biosynthesis of branched-chain and/or straight-chain of fatty acids. The sequence is that of Beta-ketoacyl-[acyl-carrier-protein] synthase III from Sinorhizobium medicae (strain WSM419) (Ensifer medicae).